The chain runs to 944 residues: Leucine--tRNA ligase 2 (944 aa).

A 'HIGH' region motif is present at residues 36–46 (PYPNSPFHLGH). Positions 621–625 (KMSKS) match the 'KMSKS' region motif. Position 624 (K624) interacts with ATP.

The protein belongs to the class-I aminoacyl-tRNA synthetase family.

It localises to the cytoplasm. It carries out the reaction tRNA(Leu) + L-leucine + ATP = L-leucyl-tRNA(Leu) + AMP + diphosphate. This chain is Leucine--tRNA ligase 2, found in Sulfurisphaera tokodaii (strain DSM 16993 / JCM 10545 / NBRC 100140 / 7) (Sulfolobus tokodaii).